We begin with the raw amino-acid sequence, 163 residues long: Nucleotide-binding protein DET1318 (163 aa).

Belongs to the YajQ family.

Its function is as follows. Nucleotide-binding protein. In Dehalococcoides mccartyi (strain ATCC BAA-2266 / KCTC 15142 / 195) (Dehalococcoides ethenogenes (strain 195)), this protein is Nucleotide-binding protein DET1318.